The chain runs to 104 residues: Enhancer of rudimentary homolog 1 (104 aa).

Belongs to the E(R) family. In terms of assembly, homodimer. Component of the erh1-mmi1 complex. Interacts with mmi1 (via N-terminus) in a 2:2 stoichiometry.

It localises to the nucleus. Its subcellular location is the cytoplasm. Forms part of the erh1-mmi1 complex that recruits the CCR4-NOT complex and the NURS complex to target RNAs. Suppresses the meiotic program during vegetative growth and promotes the meiotic program during mating. Recruitment of the NURS complex to target mRNAs promotes mRNA decay by engagement of the nuclear exosome, and formation of heterochromatin islands at meiotic genes silenced by the exosome. Recruitment of the CCR4-NOT complex to target RNAs promotes heterochromatin formation at RNAi-dependent heterochromatin domains (HOODs), including a subset of meiotic genes, lncRNAs and retrotransposons. Recruitment of the CCR4-NOT complex to rDNA promotes rDNA heterochromatin assembly. The sequence is that of Enhancer of rudimentary homolog 1 from Schizosaccharomyces pombe (strain 972 / ATCC 24843) (Fission yeast).